Here is a 155-residue protein sequence, read N- to C-terminus: Cyanate hydratase (155 aa).

Catalysis depends on residues Arg101, Glu104, and Ser127.

Belongs to the cyanase family.

The catalysed reaction is cyanate + hydrogencarbonate + 3 H(+) = NH4(+) + 2 CO2. Functionally, catalyzes the reaction of cyanate with bicarbonate to produce ammonia and carbon dioxide. This is Cyanate hydratase from Coccidioides posadasii (strain C735) (Valley fever fungus).